The primary structure comprises 122 residues: LYR motif-containing protein 1 (122 aa).

Belongs to the complex I LYR family.

This chain is LYR motif-containing protein 1 (lyrm1), found in Xenopus laevis (African clawed frog).